The following is a 288-amino-acid chain: Homoserine kinase (288 aa).

78–88 (PLARGLGSSSS) is a binding site for ATP.

This sequence belongs to the GHMP kinase family. Homoserine kinase subfamily.

The protein localises to the cytoplasm. It carries out the reaction L-homoserine + ATP = O-phospho-L-homoserine + ADP + H(+). It functions in the pathway amino-acid biosynthesis; L-threonine biosynthesis; L-threonine from L-aspartate: step 4/5. Its function is as follows. Catalyzes the ATP-dependent phosphorylation of L-homoserine to L-homoserine phosphate. The sequence is that of Homoserine kinase from Streptococcus agalactiae serotype III (strain NEM316).